The sequence spans 873 residues: Alanine--tRNA ligase (873 aa).

Residues His-563, His-567, Cys-665, and His-669 each contribute to the Zn(2+) site.

It belongs to the class-II aminoacyl-tRNA synthetase family. Zn(2+) is required as a cofactor.

Its subcellular location is the cytoplasm. The enzyme catalyses tRNA(Ala) + L-alanine + ATP = L-alanyl-tRNA(Ala) + AMP + diphosphate. In terms of biological role, catalyzes the attachment of alanine to tRNA(Ala) in a two-step reaction: alanine is first activated by ATP to form Ala-AMP and then transferred to the acceptor end of tRNA(Ala). Also edits incorrectly charged Ser-tRNA(Ala) and Gly-tRNA(Ala) via its editing domain. In Parabacteroides distasonis (strain ATCC 8503 / DSM 20701 / CIP 104284 / JCM 5825 / NCTC 11152), this protein is Alanine--tRNA ligase.